An 868-amino-acid polypeptide reads, in one-letter code: Receptor-like protein 32 (868 aa).

Positions 1–32 (MKDSWNSTSIIPFTFSSLIFFLFTFDFQDVFG) are cleaved as a signal peptide. Residues 33–815 (VPTKHLCRLE…PPELEEEDRE (783 aa)) lie on the Extracellular side of the membrane. Residues Asn-73, Asn-109, Asn-141, and Asn-165 are each glycosylated (N-linked (GlcNAc...) asparagine). LRR repeat units lie at residues 118 to 142 (LRFL…IENF), 143 to 166 (SHLT…IGNL), 168 to 188 (QLTF…FFGN), 189 to 213 (MNQL…LLNL), 214 to 237 (KHLS…MSSL), 239 to 261 (NLEY…LFTI), 262 to 285 (ASLT…NISS), 287 to 310 (STLT…ISKF), 312 to 334 (NLQD…IFTN), 335 to 360 (LKSL…LFSS), 362 to 385 (LNSI…SVAD), 389 to 412 (TQLI…LRSQ), 413 to 436 (HKMT…LWTL), 438 to 459 (KLIF…TEHG), 465 to 489 (KPSM…ICAL), 490 to 515 (RSLI…NLKS), 517 to 538 (LSFL…IFKS), 540 to 560 (RSLD…FIRL), 561 to 586 (SALE…SLKK), 588 to 606 (QVLV…HASF), 607 to 630 (HTLR…YFVN), 675 to 699 (LKIY…IGLL), 700 to 723 (KELH…MGNL), 724 to 747 (RELE…LGNL), and 749 to 772 (YLAY…QFRR). Asn-233 carries N-linked (GlcNAc...) asparagine glycosylation. Residues Asn-275 and Asn-282 are each glycosylated (N-linked (GlcNAc...) asparagine). Residues Asn-342 and Asn-347 are each glycosylated (N-linked (GlcNAc...) asparagine). N-linked (GlcNAc...) asparagine glycosylation is found at Asn-477 and Asn-503. A glycan (N-linked (GlcNAc...) asparagine) is linked at Asn-574. Residue Asn-613 is glycosylated (N-linked (GlcNAc...) asparagine). N-linked (GlcNAc...) asparagine glycosylation is found at Asn-706, Asn-746, Asn-754, and Asn-774. A helical transmembrane segment spans residues 816 to 836 (VFSWIAAAIGFGPGIAFGLTI). At 837–868 (RYILVFYKPDWFMHTFGHLQPSAHEKRLRRKQ) the chain is on the cytoplasmic side.

This sequence belongs to the RLP family.

It localises to the cell membrane. The protein is Receptor-like protein 32 of Arabidopsis thaliana (Mouse-ear cress).